Reading from the N-terminus, the 171-residue chain is Ribosome maturation factor RimM (171 aa).

Positions 97–169 (DGEFYYHEII…RVDVSIMEGL (73 aa)) constitute a PRC barrel domain.

The protein belongs to the RimM family. As to quaternary structure, binds ribosomal protein uS19.

Its subcellular location is the cytoplasm. An accessory protein needed during the final step in the assembly of 30S ribosomal subunit, possibly for assembly of the head region. Essential for efficient processing of 16S rRNA. May be needed both before and after RbfA during the maturation of 16S rRNA. It has affinity for free ribosomal 30S subunits but not for 70S ribosomes. In Lactococcus lactis subsp. lactis (strain IL1403) (Streptococcus lactis), this protein is Ribosome maturation factor RimM.